Reading from the N-terminus, the 211-residue chain is Proteasome subunit beta 1 (211 aa).

Residues 1–17 constitute a propeptide, removed in mature form; by autocatalysis; that stretch reads MVIMGNELQLENKILKG. Thr-18 functions as the Nucleophile in the catalytic mechanism.

It belongs to the peptidase T1B family. As to quaternary structure, the 20S proteasome core is composed of 14 alpha and 14 beta subunits that assemble into four stacked heptameric rings, resulting in a barrel-shaped structure. The two inner rings, each composed of seven catalytic beta subunits, are sandwiched by two outer rings, each composed of seven alpha subunits. The catalytic chamber with the active sites is on the inside of the barrel. Has a gated structure, the ends of the cylinder being occluded by the N-termini of the alpha-subunits. Is capped at one or both ends by the proteasome regulatory ATPase, PAN.

Its subcellular location is the cytoplasm. The enzyme catalyses Cleavage of peptide bonds with very broad specificity.. The formation of the proteasomal ATPase PAN-20S proteasome complex, via the docking of the C-termini of PAN into the intersubunit pockets in the alpha-rings, triggers opening of the gate for substrate entry. Interconversion between the open-gate and close-gate conformations leads to a dynamic regulation of the 20S proteasome proteolysis activity. Component of the proteasome core, a large protease complex with broad specificity involved in protein degradation. This is Proteasome subunit beta 1 from Saccharolobus islandicus (strain M.16.27) (Sulfolobus islandicus).